The chain runs to 194 residues: Calcium-binding protein J (194 aa).

2 EF-hand domains span residues Trp-62 to Ala-97 and Pro-98 to Cys-133. Asp-75, Asp-77, Asn-79, Glu-86, Asp-111, Asp-113, Ser-115, His-117, and Glu-122 together coordinate Ca(2+).

It belongs to the recoverin family.

The polypeptide is Calcium-binding protein J (cbpJ) (Dictyostelium discoideum (Social amoeba)).